We begin with the raw amino-acid sequence, 229 residues long: Clathrin light chain (229 aa).

Disordered regions lie at residues 1–24 (MSQFPALEDFDDGLVTAPVDDSKN) and 76–132 (EMQA…KLRE). Positions 107-132 (EPVRKWKEDQMKRIQERDESSKKLRE) are enriched in basic and acidic residues. Ser-229 is modified (phosphoserine).

This sequence belongs to the clathrin light chain family. In terms of assembly, clathrin coats are formed from molecules containing 3 heavy chains and 3 light chains.

The protein localises to the cytoplasmic vesicle membrane. Its subcellular location is the membrane. It localises to the coated pit. Functionally, clathrin is the major protein of the polyhedral coat of coated pits and vesicles. The polypeptide is Clathrin light chain (clc1) (Schizosaccharomyces pombe (strain 972 / ATCC 24843) (Fission yeast)).